A 248-amino-acid chain; its full sequence is 14-3-3-like protein G-BOX factor 14 lambda (248 aa).

A phosphoserine; by CRPK1 mark is found at Ser-70, Ser-112, and Ser-193. Thr-214 bears the Phosphothreonine; by CRPK1 mark.

Belongs to the 14-3-3 family. In terms of assembly, interacts with SERK1 in the cell membrane. Component of the SERK1 signaling complex, composed of KAPP, CDC48A, GRF6 or GRF7, SERK1, SERK2, SERK3/BAK1 and BRI1. Interacts with TPK1. Interacts with ADF1. Binds to CRPK1 at the plasma membrane. Interacts with DREB1A and DREB1B in the nucleus when activated by CRPK1-mediated phosphorylation upon freezing. Interacts with CINV1. Binds to the N-terminal region of B1L. Post-translationally, transphosphorylated by SERK1. In terms of processing, phosphorylated by CRPK1 in response to cold.

It is found in the nucleus. It localises to the cell membrane. Its subcellular location is the cytoplasm. Is associated with a DNA binding complex that binds to the G box, a well-characterized cis-acting DNA regulatory element found in plant genes. Specific negative regulator of slow-vacuolar (SV) ion channel. Mediates F-actin dynamics possibly through inhibiting ADF1 phosphorylation. Negative regulator of freezing tolerance that modulates cold-responsive C-repeat-binding factors (CBF) DREB1A and DREB1B proteins stability by facilitating their ubiquitin-mediated degradation when activated by CRPK1-mediated phosphorylation in freezing conditions; this processus is counteracted by B1L. This Arabidopsis thaliana (Mouse-ear cress) protein is 14-3-3-like protein G-BOX factor 14 lambda.